A 104-amino-acid chain; its full sequence is MYNQEVKLTTKEILEKEFKTSMRGYSQDEVDKFLDVVIQDYEVFQKKIERLEQEIHQLRTEAKRAASERQTRHQTSPSVGSTNYDILQRLSNLEKKVFGNKLYE.

Positions 34 to 72 (LDVVIQDYEVFQKKIERLEQEIHQLRTEAKRAASERQTR) form a coiled coil. A compositionally biased stretch (basic and acidic residues) spans 60–71 (TEAKRAASERQT). Residues 60–82 (TEAKRAASERQTRHQTSPSVGST) form a disordered region. Polar residues predominate over residues 73–82 (HQTSPSVGST).

Belongs to the GpsB family. In terms of assembly, forms polymers through the coiled coil domains. Interacts with PBP1, MreC and EzrA.

The protein localises to the cytoplasm. Functionally, divisome component that associates with the complex late in its assembly, after the Z-ring is formed, and is dependent on DivIC and PBP2B for its recruitment to the divisome. Together with EzrA, is a key component of the system that regulates PBP1 localization during cell cycle progression. Its main role could be the removal of PBP1 from the cell pole after pole maturation is completed. Also contributes to the recruitment of PBP1 to the division complex. Not essential for septum formation. The sequence is that of Cell cycle protein GpsB from Halalkalibacterium halodurans (strain ATCC BAA-125 / DSM 18197 / FERM 7344 / JCM 9153 / C-125) (Bacillus halodurans).